Reading from the N-terminus, the 815-residue chain is Leucine--tRNA ligase (815 aa).

The 'HIGH' region motif lies at 42–52; it reads PYPSGRLHMGH. A 'KMSKS' region motif is present at residues 574–578; it reads KMSKS. An ATP-binding site is contributed by lysine 577.

Belongs to the class-I aminoacyl-tRNA synthetase family.

Its subcellular location is the cytoplasm. It carries out the reaction tRNA(Leu) + L-leucine + ATP = L-leucyl-tRNA(Leu) + AMP + diphosphate. The sequence is that of Leucine--tRNA ligase from Marinomonas sp. (strain MWYL1).